We begin with the raw amino-acid sequence, 1232 residues long: Histone-lysine N-methyltransferase MECOM (1232 aa).

The interval 22–68 (PEIPLEEMPDADADGITSVPSLHIQEPCSPATSSESFTPKEGSPYKA) is disordered. Residues 25 to 34 (PLEEMPDADA) are compositionally biased toward acidic residues. The SET domain occupies 80–192 (DEFELRESTM…PGEELLLFMK (113 aa)). Residues Lys-101 and Lys-192 each participate in a glycyl lysine isopeptide (Lys-Gly) (interchain with G-Cter in SUMO2) cross-link. The tract at residues 191–442 (MKSEEDPHEP…NHFAAGGFFG (252 aa)) is interaction with SUV39H1 and probably MAPK9 and SMAD3. 5 C2H2-type zinc fingers span residues 211 to 238 (HRCE…STPH), 265 to 287 (QDCK…MLSH), 293 to 315 (YKCD…QMSH), 321 to 344 (YECE…RSQH), and 350 to 372 (HACP…KHIH). Lys-294 participates in a covalent cross-link: Glycyl lysine isopeptide (Lys-Gly) (interchain with G-Cter in SUMO2). Residues Lys-369 and Lys-376 each participate in a glycyl lysine isopeptide (Lys-Gly) (interchain with G-Cter in SUMO2) cross-link. Residues 378–400 (FICEVCHKSYTQFSNLCRHKRMH) form a C2H2-type 6 zinc finger. The C2H2-type 7; atypical zinc-finger motif lies at 407–429 (IKCKDCGQMFSTTSSLNKHRRFC). Residues Lys-432, Lys-525, Lys-545, Lys-549, and Lys-557 each participate in a glycyl lysine isopeptide (Lys-Gly) (interchain with G-Cter in SUMO2) cross-link. The disordered stretch occupies residues 548–622 (SKHPPVGDNK…KCKENGKMFK (75 aa)). The span at 562 to 577 (LPERSSEERPLEKISD) shows a compositional bias: basic and acidic residues. The span at 588–600 (STPSGSDLETTSG) shows a compositional bias: polar residues. The segment covering 608-622 (ESDKEKCKENGKMFK) has biased composition (basic and acidic residues). A Nuclear localization signal motif is present at residues 611 to 624 (KEKCKENGKMFKDK). Lys-624 participates in a covalent cross-link: Glycyl lysine isopeptide (Lys-Gly) (interchain with G-Cter in SUMO2). Residue Ser-626 is modified to Phosphoserine. Residues Lys-637, Lys-665, Lys-687, and Lys-723 each participate in a glycyl lysine isopeptide (Lys-Gly) (interchain with G-Cter in SUMO2) cross-link. The segment at 720–823 (LPLKMEPQSP…DGSLQHARPT (104 aa)) is disordered. Position 728 is a phosphoserine (Ser-728). Glycyl lysine isopeptide (Lys-Gly) (interchain with G-Cter in SUMO2) cross-links involve residues Lys-733, Lys-734, and Lys-737. Ser-742 is subject to Phosphoserine. Positions 743 to 747 (PFDLT) match the CTBP-binding motif 1 motif. Glycyl lysine isopeptide (Lys-Gly) (interchain with G-Cter in SUMO2) cross-links involve residues Lys-751, Lys-754, and Lys-762. Polar residues predominate over residues 758–773 (SGPSKPSGTPATSQDQ). Positions 774–778 (PLDLS) match the CTBP-binding motif 2 motif. Glycyl lysine isopeptide (Lys-Gly) (interchain with G-Cter in SUMO2) cross-links involve residues Lys-789, Lys-802, and Lys-803. The span at 791–805 (TEPRKNHVFGEKKGS) shows a compositional bias: basic and acidic residues. A compositionally biased stretch (polar residues) spans 806–816 (NMDTRPSSDGS). Residues Lys-837, Lys-846, Lys-848, and Lys-879 each participate in a glycyl lysine isopeptide (Lys-Gly) (interchain with G-Cter in SUMO2) cross-link. 3 C2H2-type zinc fingers span residues 914–936 (YTCR…LRTH), 942–965 (YRCK…RNIH), and 971–993 (FKCH…LKKH). Lys-1020 participates in a covalent cross-link: Glycyl lysine isopeptide (Lys-Gly) (interchain with G-Cter in SUMO2). Residues 1032 to 1043 (IGNSNHGSQSPR) show a composition bias toward polar residues. A disordered region spans residues 1032–1107 (IGNSNHGSQS…GVTRLDEEIP (76 aa)). Ser-1039 and Ser-1041 each carry phosphoserine. Residues 1044–1059 (NMEERMNGSHFKDKKA) are compositionally biased toward basic and acidic residues. Residues Lys-1055 and Lys-1058 each participate in a glycyl lysine isopeptide (Lys-Gly) (interchain with G-Cter in SUMO2) cross-link. Residues 1068–1088 (LLDDEEVEDEVLLDEEDEDND) show a composition bias toward acidic residues. Basic and acidic residues predominate over residues 1089 to 1104 (IPGKPRKELGVTRLDE). Residues Lys-1122, Lys-1129, Lys-1134, Lys-1151, Lys-1178, and Lys-1186 each participate in a glycyl lysine isopeptide (Lys-Gly) (interchain with G-Cter in SUMO2) cross-link.

In terms of assembly, homooligomer. Interacts with CTBP1. Interacts with SMAD3 (via MH2 domain); the interaction is direct. Interacts with SMAD4; through interaction with SMAD3. Interacts with CREBBP, KAT2B and histone deacetylases. Interacts with MAPK8 and MAPK9; inhibits JNK signaling. Interacts with SUV39H1 (via SET domain); enhances MECOM transcriptional repression activity. Post-translationally, may be acetylated by CREBBP and KAT2B.

Its subcellular location is the nucleus. It localises to the nucleus speckle. The protein resides in the cytoplasm. It carries out the reaction L-lysyl(9)-[histone H3] + S-adenosyl-L-methionine = N(6)-methyl-L-lysyl(9)-[histone H3] + S-adenosyl-L-homocysteine + H(+). Functionally, functions as a transcriptional regulator binding to DNA sequences in the promoter region of target genes and regulating positively or negatively their expression. Oncogene which plays a role in development, cell proliferation and differentiation. May also play a role in apoptosis through regulation of the JNK and TGF-beta signaling. Involved in hematopoiesis. Displays histone methyltransferase activity and monomethylates 'Lys-9' of histone H3 (H3K9me1) in vitro. Probably catalyzes the monomethylation of free histone H3 in the cytoplasm which is then transported to the nucleus and incorporated into nucleosomes where SUV39H methyltransferases use it as a substrate to catalyze histone H3 'Lys-9' trimethylation. Likely to be one of the primary histone methyltransferases along with PRDM16 that direct cytoplasmic H3K9me1 methylation. This chain is Histone-lysine N-methyltransferase MECOM, found in Mus musculus (Mouse).